Here is a 324-residue protein sequence, read N- to C-terminus: Serine/threonine-protein phosphatase PP1 isozyme 8 (324 aa).

Mn(2+)-binding residues include Asp66, His68, Asp94, and Asn126. Catalysis depends on His127, which acts as the Proton donor. Mn(2+) is bound by residues His175 and His250.

Belongs to the PPP phosphatase family. PP-1 subfamily. Mn(2+) is required as a cofactor. In terms of tissue distribution, expressed in roots, rosettes and flowers.

The protein localises to the nucleus. It localises to the cytoplasm. It catalyses the reaction O-phospho-L-seryl-[protein] + H2O = L-seryl-[protein] + phosphate. The enzyme catalyses O-phospho-L-threonyl-[protein] + H2O = L-threonyl-[protein] + phosphate. Its activity is regulated as follows. Phosphatase activity is strongly reduced by the protein phosphatase inhibitor 2 (I-2). Serine/threonine-protein phosphatase that possesses phosphatase activity toward para-nitrophenyl phosphate (pNPP) in vitro. In Arabidopsis thaliana (Mouse-ear cress), this protein is Serine/threonine-protein phosphatase PP1 isozyme 8.